A 435-amino-acid chain; its full sequence is UDP-N-acetylmuramate--L-alanine ligase (435 aa).

108–114 (GSHGKTS) contacts ATP.

The protein belongs to the MurCDEF family.

The protein resides in the cytoplasm. It carries out the reaction UDP-N-acetyl-alpha-D-muramate + L-alanine + ATP = UDP-N-acetyl-alpha-D-muramoyl-L-alanine + ADP + phosphate + H(+). It participates in cell wall biogenesis; peptidoglycan biosynthesis. Cell wall formation. This Shouchella clausii (strain KSM-K16) (Alkalihalobacillus clausii) protein is UDP-N-acetylmuramate--L-alanine ligase.